An 89-amino-acid polypeptide reads, in one-letter code: Small ribosomal subunit protein uS15 (89 aa).

This sequence belongs to the universal ribosomal protein uS15 family. As to quaternary structure, part of the 30S ribosomal subunit. Forms a bridge to the 50S subunit in the 70S ribosome, contacting the 23S rRNA.

One of the primary rRNA binding proteins, it binds directly to 16S rRNA where it helps nucleate assembly of the platform of the 30S subunit by binding and bridging several RNA helices of the 16S rRNA. In terms of biological role, forms an intersubunit bridge (bridge B4) with the 23S rRNA of the 50S subunit in the ribosome. The chain is Small ribosomal subunit protein uS15 from Haemophilus influenzae (strain 86-028NP).